A 362-amino-acid chain; its full sequence is G-protein coupled receptor homolog US27 (362 aa).

The Virion surface portion of the chain corresponds to 1–34 (MTTSTNNQTLTQVSNMTNHTLNSTEIYQLFEYTR). Residues asparagine 7, asparagine 15, asparagine 18, and asparagine 22 are each glycosylated (N-linked (GlcNAc...) asparagine; by host). Residues 35–58 (LGVWLMCIVGTFLNVLVITTILYY) form a helical membrane-spanning segment. At 59–67 (RRKKKSPSD) the chain is on the intravirion side. A helical membrane pass occupies residues 68 to 90 (TYICNLAVADLLIVVGLPFFLEY). At 91–104 (AKHHPKLSREVVCS) the chain is on the virion surface side. A helical transmembrane segment spans residues 105 to 126 (GLNACFYICLFAGVCFLINLSM). At 127-148 (DRYCVIVWGVELNRVRNNKRAT) the chain is on the intravirion side. A helical transmembrane segment spans residues 149-167 (CWVVIFWILAVLMGMPHYL). Topologically, residues 168-193 (MYSHTNNECVGEFANETSGWFPVFLN) are virion surface. Residues 194–213 (TKVNICGYLAPIALMAYTYN) traverse the membrane as a helical segment. The Intravirion portion of the chain corresponds to 214–233 (RMVRFIINYVGKWHMQTLHV). Residues 234 to 257 (LLVVVVSFASFWFPFNLALFLESI) traverse the membrane as a helical segment. Over 258 to 274 (RLLAGVYNDTLQNVIIF) the chain is Virion surface. A helical transmembrane segment spans residues 275 to 298 (CLYVGQFLAYVRACLNPGIYILVG). The Intravirion portion of the chain corresponds to 299–362 (TQMRKDMWTT…MESGEEEFLL (64 aa)). Positions 341–362 (TKRTHYDRKNAPMESGEEEFLL) are disordered.

It belongs to the G-protein coupled receptor 1 family. Heterodimer with US28. Interacts with host Gi alpha-1 subunit GNAI1; this interaction does not lead to the catalytic activation of Gi complex.

The protein resides in the virion. It localises to the host cell membrane. In terms of biological role, interacts with the host Gi complex without activating it, thereby probably interfering with the chemokine-Gi signaling. May also function as a G protein sink to sequester G protein from the cell surface via internalization. Plays an important role in spread of HCMV via the extracellular route. This chain is G-protein coupled receptor homolog US27 (US27), found in Homo sapiens (Human).